Here is a 516-residue protein sequence, read N- to C-terminus: Delta(24)-sterol reductase (516 aa).

A signal peptide spans 1–22 (MEPAVSLAVCALLFLLWVRVKG). At 23-31 (LEFVLIHQR) the chain is on the lumenal side. A helical membrane pass occupies residues 32–52 (WVFVCLFLLPLSLIFDIYYYV). Over 53 to 516 (RAWVVFKLSS…YDKICKAARH (464 aa)) the chain is Cytoplasmic. In terms of domain architecture, FAD-binding PCMH-type spans 58–234 (FKLSSAPRLH…VAAEIRIIPA (177 aa)). Position 163-175 (163-175 (TVGGLIMGTGIES)) interacts with FAD.

The protein belongs to the FAD-binding oxidoreductase/transferase type 4 family. In terms of assembly, interacts with DHCR7; this interaction regulates DHCR7 activity. FAD is required as a cofactor.

It is found in the endoplasmic reticulum membrane. The protein localises to the golgi apparatus membrane. It catalyses the reaction cholesterol + NADP(+) = desmosterol + NADPH + H(+). The enzyme catalyses lanosterol + NADPH + H(+) = 24,25-dihydrolanosterol + NADP(+). The catalysed reaction is 5alpha-cholest-8-en-3beta-ol + NADP(+) = zymosterol + NADPH + H(+). The protein operates within steroid biosynthesis; cholesterol biosynthesis. Its function is as follows. Catalyzes the reduction of the delta-24 double bond of sterol intermediates during cholesterol biosynthesis. In addition to its cholesterol-synthesizing activity, can protect cells from oxidative stress by reducing caspase 3 activity during apoptosis induced by oxidative stress. Also protects against amyloid-beta peptide-induced apoptosis. This is Delta(24)-sterol reductase (Dhcr24) from Rattus norvegicus (Rat).